The sequence spans 258 residues: Cell division protein FtsQ (258 aa).

Residues 1–29 lie on the Cytoplasmic side of the membrane; that stretch reads MAKNAPAPRGARRKPVKKVGVPLRERVAT. The chain crosses the membrane as a helical span at residues 30–50; the sequence is AVPWMLVGSVAMVSLLAVIYL. Over 51-258 the chain is Periplasmic; that stretch reads PAALDGYPIR…MAVTWREQQS (208 aa). In terms of domain architecture, POTRA spans 57–127; the sequence is YPIRKVGVDG…DTVVLTVEER (71 aa).

Belongs to the FtsQ/DivIB family. FtsQ subfamily. In terms of assembly, part of a complex composed of FtsB, FtsL and FtsQ.

Its subcellular location is the cell inner membrane. Its function is as follows. Essential cell division protein. May link together the upstream cell division proteins, which are predominantly cytoplasmic, with the downstream cell division proteins, which are predominantly periplasmic. May control correct divisome assembly. The chain is Cell division protein FtsQ from Alcanivorax borkumensis (strain ATCC 700651 / DSM 11573 / NCIMB 13689 / SK2).